The sequence spans 461 residues: tRNA modification GTPase MnmE (461 aa).

(6S)-5-formyl-5,6,7,8-tetrahydrofolate is bound by residues R27, E89, and R128. A TrmE-type G domain is found at 224-382 (GLKTAIVGRP…LEALIKKLFF (159 aa)). N234 contacts K(+). GTP-binding positions include 234–239 (NVGKSS), 253–259 (TDVAGTT), and 278–281 (DTAG). Position 238 (S238) interacts with Mg(2+). K(+) contacts are provided by T253, V255, and T258. T259 contributes to the Mg(2+) binding site. K461 contacts (6S)-5-formyl-5,6,7,8-tetrahydrofolate.

This sequence belongs to the TRAFAC class TrmE-Era-EngA-EngB-Septin-like GTPase superfamily. TrmE GTPase family. Homodimer. Heterotetramer of two MnmE and two MnmG subunits. K(+) is required as a cofactor.

Its subcellular location is the cytoplasm. Exhibits a very high intrinsic GTPase hydrolysis rate. Involved in the addition of a carboxymethylaminomethyl (cmnm) group at the wobble position (U34) of certain tRNAs, forming tRNA-cmnm(5)s(2)U34. This is tRNA modification GTPase MnmE from Lactobacillus delbrueckii subsp. bulgaricus (strain ATCC BAA-365 / Lb-18).